Consider the following 327-residue polypeptide: DNA-directed RNA polymerase subunit alpha (327 aa).

An alpha N-terminal domain (alpha-NTD) region spans residues 1–233 (MVREKVKVST…NLFIPFLHVE (233 aa)). An alpha C-terminal domain (alpha-CTD) region spans residues 267-327 (LAFQYIFIDQ…KKILDILEKK (61 aa)).

Belongs to the RNA polymerase alpha chain family. In plastids the minimal PEP RNA polymerase catalytic core is composed of four subunits: alpha, beta, beta', and beta''. When a (nuclear-encoded) sigma factor is associated with the core the holoenzyme is formed, which can initiate transcription.

The protein resides in the plastid. It is found in the chloroplast. It catalyses the reaction RNA(n) + a ribonucleoside 5'-triphosphate = RNA(n+1) + diphosphate. Its function is as follows. DNA-dependent RNA polymerase catalyzes the transcription of DNA into RNA using the four ribonucleoside triphosphates as substrates. The protein is DNA-directed RNA polymerase subunit alpha of Lepidium virginicum (Virginia pepperweed).